Reading from the N-terminus, the 395-residue chain is Cyclic AMP-responsive element-binding protein 3-like protein 4 (395 aa).

At Met-1–Ser-295 the chain is on the cytoplasmic side. The interval Glu-82–Ser-108 is disordered. Residues Val-217–Leu-280 enclose the bZIP domain. The tract at residues Lys-219–Arg-248 is basic motif. The interval Leu-259–Leu-280 is leucine-zipper. A helical; Signal-anchor for type II membrane protein membrane pass occupies residues Thr-296–Phe-316. Residues Gln-317 to Met-395 are Lumenal-facing. Residues Arg-355 to Met-395 form a disordered region. Asn-366 carries an N-linked (GlcNAc...) asparagine glycan.

Belongs to the bZIP family. ATF subfamily. Binds DNA as a dimer. Post-translationally, N-glycosylated in the C-terminal region. Controlled by regulated intramembrane proteolysis (RIP). Following ER stress a fragment containing the cytoplasmic transcription factor domain is released by proteolysis. The cleavage seems to be performed sequentially by site-1 and site-2 proteases (PS1 and PS2). PS1 cleavage may be suppressed by a determinant in the C-terminal region. In terms of tissue distribution, according to PubMed:11830526, exclusively expressed in the prostate. Expressed in breast and prostate cancer cell lines. Expressed in prostatic luminal epithelial cells (at protein level). Expression is significantly more abundant in prostate cancer than in benign prostatic tissue (prostatic hyperplasia). According to PubMed:12111373, also expressed in brain, pancreas and skeletal muscle, and at lower levels in small intestine, testis, leukocyte and thymus.

It is found in the endoplasmic reticulum membrane. Its subcellular location is the golgi apparatus membrane. The protein resides in the nucleus. Its function is as follows. Transcriptional activator that may play a role in the unfolded protein response. Binds to the UPR element (UPRE) but not to CRE element. Preferentially binds DNA with to the consensus sequence 5'-T[GT]ACGT[GA][GT]-3' and has transcriptional activation activity from UPRE. Binds to NF-kappa-B site and has transcriptional activation activity from NF-kappa-B-containing regulatory elements. The protein is Cyclic AMP-responsive element-binding protein 3-like protein 4 (CREB3L4) of Homo sapiens (Human).